Reading from the N-terminus, the 268-residue chain is Tropinone reductase homolog At2g29170 (268 aa).

22 to 46 lines the NADP(+) pocket; sequence LVTGGSKGLGEAVVEELAMLGARVH. S155 serves as a coordination point for substrate. Residue Y168 is the Proton acceptor of the active site.

The protein belongs to the short-chain dehydrogenases/reductases (SDR) family. SDR65C subfamily.

In Arabidopsis thaliana (Mouse-ear cress), this protein is Tropinone reductase homolog At2g29170.